A 174-amino-acid chain; its full sequence is Ribosome maturation factor RimP (174 aa).

Belongs to the RimP family.

The protein resides in the cytoplasm. Its function is as follows. Required for maturation of 30S ribosomal subunits. This chain is Ribosome maturation factor RimP, found in Bdellovibrio bacteriovorus (strain ATCC 15356 / DSM 50701 / NCIMB 9529 / HD100).